The sequence spans 267 residues: Transcription factor HES-1 (267 aa).

Residues 1 to 45 (MPADLMEKNSSSPVAATPASMSNTPDKPKTASEHRKSSKPIMEKR) form a disordered region. The span at 8 to 25 (KNSSSPVAATPASMSNTP) shows a compositional bias: polar residues. Basic and acidic residues predominate over residues 26–35 (DKPKTASEHR). The bHLH domain maps to 34-91 (HRKSSKPIMEKRRRARINESLGQLKTLILDALKKDSSRHSKLEKADILEMTVKHLRNL). The Orange domain occupies 110–143 (YRAGFSECMNEVTRFLSTCEGVNTDVRTRLLGHL). The WRPW motif signature appears at 264 to 267 (WRPW).

Transcription repression requires formation of a complex with a corepressor protein of the Groucho/TLE family. Interacts with the bHLH protein hes2, and binds DNA in the form of a heterodimer with the bHLH protein hey1/hrt1. Interacts with the bHLH protein hes6; this interaction may inhibit the transcriptional repressor activity.

It localises to the nucleus. Its function is as follows. Transcriptional repressor of a subset of early mesodermal genes including myod1 and t/bra. Binds DNA on N-box motifs: 5'-CACNAG-3'. Acts as a negative regulator of myogenesis, mediating Notch signaling to repress expression of myod1. The chain is Transcription factor HES-1 from Xenopus tropicalis (Western clawed frog).